The sequence spans 554 residues: 5'-AMP-activated protein kinase catalytic subunit alpha-1 (554 aa).

The Protein kinase domain maps to 22 to 274 (YILGDTLGVG…IKDIREHEWF (253 aa)). Phosphothreonine is present on Thr-27. ATP contacts are provided by residues 28–36 (LGVGTFGKV) and Lys-51. Asp-145 acts as the Proton acceptor in catalysis. Position 178 is a phosphothreonine; by LKB1 and CaMKK2 (Thr-178). Phosphothreonine occurs at positions 264 and 350. Residues 297–376 (EALKEVCEKF…PERVPFLVAE (80 aa)) are AIS. Ser-351 is subject to Phosphoserine. The residue at position 355 (Ser-355) is a Phosphoserine; by ULK1. Thr-363 carries the post-translational modification Phosphothreonine; by ULK1. Thr-377 bears the Phosphothreonine mark. The residue at position 392 (Ser-392) is a Phosphoserine; by ULK1. Ser-462 bears the Phosphoserine mark. A compositionally biased stretch (polar residues) spans 480-500 (KSGTATPQRSGSVSNYRSCQR). The interval 480-531 (KSGTATPQRSGSVSNYRSCQRSDSDAEAQGKSSEVSLTSSVTSLDSSPVDLT) is disordered. Ser-481 bears the Phosphoserine; by ULK1 mark. A Phosphothreonine; by ULK1 modification is found at Thr-483. Phosphothreonine is present on Thr-485. Phosphoserine is present on residues Ser-491, Ser-503, Ser-519, and Ser-522. Positions 511 to 530 (SSEVSLTSSVTSLDSSPVDL) are enriched in low complexity.

Belongs to the protein kinase superfamily. CAMK Ser/Thr protein kinase family. SNF1 subfamily. In terms of assembly, AMPK is a heterotrimer of an alpha catalytic subunit (PRKAA1 or PRKAA2), a beta (PRKAB1 or PRKAB2) and a gamma non-catalytic subunits (PRKAG1, PRKAG2 or PRKAG3). Interacts with FNIP1 and FNIP2. The cofactor is Mg(2+). Post-translationally, ubiquitinated. Phosphorylated at Thr-183 by STK11/LKB1 in complex with STE20-related adapter-alpha (STRADA) pseudo kinase and CAB39. Also phosphorylated at Thr-183 by CAMKK2; triggered by a rise in intracellular calcium ions, without detectable changes in the AMP/ATP ratio. CAMKK1 can also phosphorylate Thr-183, but at a much lower level. Dephosphorylated by protein phosphatase 2A and 2C (PP2A and PP2C). Phosphorylated by ULK1 and ULK2; leading to negatively regulate AMPK activity and suggesting the existence of a regulatory feedback loop between ULK1, ULK2 and AMPK. Dephosphorylated by PPM1A and PPM1B. In terms of processing, glycosylated; O-GlcNAcylated by OGT, promoting the AMP-activated protein kinase (AMPK) activity.

It localises to the cytoplasm. It is found in the nucleus. It catalyses the reaction L-seryl-[protein] + ATP = O-phospho-L-seryl-[protein] + ADP + H(+). It carries out the reaction L-threonyl-[protein] + ATP = O-phospho-L-threonyl-[protein] + ADP + H(+). The catalysed reaction is L-seryl-[acetyl-CoA carboxylase] + ATP = O-phospho-L-seryl-[acetyl-CoA carboxylase] + ADP + H(+). The enzyme catalyses L-seryl-[3-hydroxy-3-methylglutaryl-coenzyme A reductase] + ATP = O-phospho-L-seryl-[3-hydroxy-3-methylglutaryl-coenzyme A reductase] + ADP + H(+). It catalyses the reaction L-seryl-[tau protein] + ATP = O-phospho-L-seryl-[tau protein] + ADP + H(+). It carries out the reaction L-threonyl-[tau protein] + ATP = O-phospho-L-threonyl-[tau protein] + ADP + H(+). Activated by phosphorylation on Thr-183. Binding of AMP to non-catalytic gamma subunit (PRKAG1, PRKAG2 or PRKAG3) results in allosteric activation, inducing phosphorylation on Thr-183. AMP-binding to gamma subunit also sustains activity by preventing dephosphorylation of Thr-183. ADP also stimulates Thr-183 phosphorylation, without stimulating already phosphorylated AMPK. ATP promotes dephosphorylation of Thr-183, rendering the enzyme inactive. Under physiological conditions AMPK mainly exists in its inactive form in complex with ATP, which is much more abundant than AMP. Selectively inhibited by compound C (6-[4-(2-Piperidin-1-yl-ethoxy)-phenyl)]-3-pyridin-4-yl-pyyrazolo[1,5-a] pyrimidine. Activated by resveratrol, a natural polyphenol present in red wine, and S17834, a synthetic polyphenol. Functionally, catalytic subunit of AMP-activated protein kinase (AMPK), an energy sensor protein kinase that plays a key role in regulating cellular energy metabolism. In response to reduction of intracellular ATP levels, AMPK activates energy-producing pathways and inhibits energy-consuming processes: inhibits protein, carbohydrate and lipid biosynthesis, as well as cell growth and proliferation. AMPK acts via direct phosphorylation of metabolic enzymes, and by longer-term effects via phosphorylation of transcription regulators. Regulates lipid synthesis by phosphorylating and inactivating lipid metabolic enzymes such as ACACA, ACACB, GYS1, HMGCR and LIPE; regulates fatty acid and cholesterol synthesis by phosphorylating acetyl-CoA carboxylase (ACACA and ACACB) and hormone-sensitive lipase (LIPE) enzymes, respectively. Promotes lipolysis of lipid droplets by mediating phosphorylation of isoform 1 of CHKA (CHKalpha2). Regulates insulin-signaling and glycolysis by phosphorylating IRS1, PFKFB2 and PFKFB3. AMPK stimulates glucose uptake in muscle by increasing the translocation of the glucose transporter SLC2A4/GLUT4 to the plasma membrane, possibly by mediating phosphorylation of TBC1D4/AS160. Regulates transcription and chromatin structure by phosphorylating transcription regulators involved in energy metabolism such as CRTC2/TORC2, FOXO3, histone H2B, HDAC5, MEF2C, MLXIPL/ChREBP, EP300, HNF4A, p53/TP53, SREBF1, SREBF2 and PPARGC1A. Acts as a key regulator of glucose homeostasis in liver by phosphorylating CRTC2/TORC2, leading to CRTC2/TORC2 sequestration in the cytoplasm. In response to stress, phosphorylates 'Ser-36' of histone H2B (H2BS36ph), leading to promote transcription. Acts as a key regulator of cell growth and proliferation by phosphorylating FNIP1, TSC2, RPTOR, WDR24 and ATG1/ULK1: in response to nutrient limitation, negatively regulates the mTORC1 complex by phosphorylating RPTOR component of the mTORC1 complex and by phosphorylating and activating TSC2. Also phosphorylates and inhibits GATOR2 subunit WDR24 in response to nutrient limitation, leading to suppress glucose-mediated mTORC1 activation. In response to energetic stress, phosphorylates FNIP1, inactivating the non-canonical mTORC1 signaling, thereby promoting nuclear translocation of TFEB and TFE3, and inducing transcription of lysosomal or autophagy genes. In response to nutrient limitation, promotes autophagy by phosphorylating and activating ATG1/ULK1. In that process also activates WDR45/WIPI4. Phosphorylates CASP6, thereby preventing its autoprocessing and subsequent activation. In response to nutrient limitation, phosphorylates transcription factor FOXO3 promoting FOXO3 mitochondrial import. Also acts as a regulator of cellular polarity by remodeling the actin cytoskeleton; probably by indirectly activating myosin. AMPK also acts as a regulator of circadian rhythm by mediating phosphorylation of CRY1, leading to destabilize it. May regulate the Wnt signaling pathway by phosphorylating CTNNB1, leading to stabilize it. Also has tau-protein kinase activity: in response to amyloid beta A4 protein (APP) exposure, activated by CAMKK2, leading to phosphorylation of MAPT/TAU; however the relevance of such data remains unclear in vivo. Also phosphorylates CFTR, EEF2K, KLC1, NOS3 and SLC12A1. Regulates hepatic lipogenesis. Activated via SIRT3, represses sterol regulatory element-binding protein (SREBP) transcriptional activities and ATP-consuming lipogenesis to restore cellular energy balance. Upon stress, regulates mitochondrial fragmentation through phosphorylation of MTFR1L. This chain is 5'-AMP-activated protein kinase catalytic subunit alpha-1 (PRKAA1), found in Pongo abelii (Sumatran orangutan).